Here is a 503-residue protein sequence, read N- to C-terminus: uncharacterized protein (503 aa).

Composition is skewed to basic and acidic residues over residues 1 to 23 (MAHEGPRQVRDRGMTRSKAEKVR) and 203 to 215 (PLEKLGDQSRSDQ). Disordered stretches follow at residues 1 to 29 (MAHEGPRQVRDRGMTRSKAEKVRPPTVPV) and 149 to 227 (ETFQ…SNSS). Phosphoserine occurs at positions 239 and 243. 2 disordered regions span residues 346–370 (LDPARLPRPDMARSPSPKLWPGAKW) and 450–475 (LLSSSEPQRNDREGSASPPIHTGAPK). A compositionally biased stretch (basic and acidic residues) spans 347 to 356 (DPARLPRPDM).

This is an uncharacterized protein from Bos taurus (Bovine).